The chain runs to 1555 residues: Glycogen debranching enzyme (1555 aa).

Ser-87 carries the post-translational modification Phosphoserine. Catalysis depends on residues Asp-549, His-552, and Asp-650.

Belongs to the glycogen debranching enzyme family. In terms of assembly, monomer. Interacts with NHLRC1/malin. Post-translationally, the N-terminus is blocked. Ubiquitinated.

The protein resides in the cytoplasm. It catalyses the reaction Transfers a segment of a (1-&gt;4)-alpha-D-glucan to a new position in an acceptor, which may be glucose or a (1-&gt;4)-alpha-D-glucan.. The catalysed reaction is Hydrolysis of (1-&gt;6)-alpha-D-glucosidic branch linkages in glycogen phosphorylase limit dextrin.. In terms of biological role, multifunctional enzyme acting as 1,4-alpha-D-glucan:1,4-alpha-D-glucan 4-alpha-D-glycosyltransferase and amylo-1,6-glucosidase in glycogen degradation. This chain is Glycogen debranching enzyme (AGL), found in Oryctolagus cuniculus (Rabbit).